Consider the following 333-residue polypeptide: Geminin coiled-coil domain-containing protein 1 (333 aa).

Positions 83-118 (QLYRNKQLQDTLLQKEEELARLHEENNHLRQYLNST) form a coiled coil. A compositionally biased stretch (basic residues) spans 145 to 154 (KEKRKPKEHR). The disordered stretch occupies residues 145–165 (KEKRKPKEHRHSPAEIPQFKT).

The protein belongs to the GEMC1 family. In terms of processing, highly phosphorylated by CDK2; stimulates initiation of DNA replication.

It is found in the nucleus. In terms of biological role, regulator of DNA replication. Promotes initiation of chromosomal DNA replication by mediating TOPBP1- and CDK2-dependent recruitment of CDC45L onto replication origins. The chain is Geminin coiled-coil domain-containing protein 1 (Gmnc) from Mus musculus (Mouse).